The primary structure comprises 293 residues: D-psicose 3-epimerase (293 aa).

2 residues coordinate substrate: Tyr-6 and Ala-107. Glu-150 (proton donor/acceptor) is an active-site residue. Glu-150 provides a ligand contact to Mn(2+). Substrate contacts are provided by residues Glu-156 and 183–186; that span reads DTFH. Mn(2+) is bound by residues Asp-183 and His-209. Arg-215 provides a ligand contact to substrate. The active-site Proton donor/acceptor is the Glu-244. Mn(2+) is bound at residue Glu-244.

The protein belongs to the hyi family. Homotetramer. Mn(2+) serves as cofactor. The cofactor is Co(2+).

It carries out the reaction D-allulose = keto-D-fructose. Involved in the biosynthesis of D-psicose. Catalyzes the reversible epimerization of D-fructose at the C3 position to yield D-psicose. The enzyme is highly specific for D-psicose and shows very low activity with D-tagatose. In Ruminiclostridium cellulolyticum (strain ATCC 35319 / DSM 5812 / JCM 6584 / H10) (Clostridium cellulolyticum), this protein is D-psicose 3-epimerase.